Here is a 174-residue protein sequence, read N- to C-terminus: ATP-dependent protease subunit HslV (174 aa).

The active site involves Thr2. 3 residues coordinate Na(+): Gly157, Cys160, and Thr163.

It belongs to the peptidase T1B family. HslV subfamily. A double ring-shaped homohexamer of HslV is capped on each side by a ring-shaped HslU homohexamer. The assembly of the HslU/HslV complex is dependent on binding of ATP.

It localises to the cytoplasm. It catalyses the reaction ATP-dependent cleavage of peptide bonds with broad specificity.. Its activity is regulated as follows. Allosterically activated by HslU binding. Functionally, protease subunit of a proteasome-like degradation complex believed to be a general protein degrading machinery. This chain is ATP-dependent protease subunit HslV, found in Shewanella pealeana (strain ATCC 700345 / ANG-SQ1).